We begin with the raw amino-acid sequence, 3065 residues long: MAX gene-associated protein (3065 aa).

Glycyl lysine isopeptide (Lys-Gly) (interchain with G-Cter in SUMO2) cross-links involve residues Lys-4 and Lys-178. The segment at residues 84 to 260 is a DNA-binding region (T-box); it reads MWNEFYHRST…YNPFAKGFRD (177 aa). The segment covering 259-277 has biased composition (basic and acidic residues); it reads RDDGLNNKPQRDGKQKNSS. The disordered stretch occupies residues 259-322; the sequence is RDDGLNNKPQ…GHETSGKGLE (64 aa). The span at 278–289 shows a compositional bias: polar residues; it reads DQEGNNISSSSG. A compositionally biased stretch (basic and acidic residues) spans 309 to 322; sequence PLSRGHETSGKGLE. Glycyl lysine isopeptide (Lys-Gly) (interchain with G-Cter in SUMO2) cross-links involve residues Lys-323, Lys-329, Lys-349, Lys-432, Lys-460, Lys-465, and Lys-482. A Phosphoserine modification is found at Ser-534. Lys-570 participates in a covalent cross-link: Glycyl lysine isopeptide (Lys-Gly) (interchain with G-Cter in SUMO2). The tract at residues 604-653 is disordered; sequence QNASPNVPGKRGRPRKLKLCKAGRPPKNTGKSLISTKNTPVSPGSTFPDV. Ser-607 carries the phosphoserine modification. Lys-613 is covalently cross-linked (Glycyl lysine isopeptide (Lys-Gly) (interchain with G-Cter in SUMO2)). The span at 613–624 shows a compositional bias: basic residues; the sequence is KRGRPRKLKLCK. Residues 632 to 648 show a composition bias toward polar residues; it reads TGKSLISTKNTPVSPGS. Ser-645 is modified (phosphoserine). Glycyl lysine isopeptide (Lys-Gly) (interchain with G-Cter in SUMO2) cross-links involve residues Lys-654, Lys-785, Lys-791, Lys-817, and Lys-826. Ser-851 bears the Phosphoserine mark. Residues 881 to 911 are disordered; the sequence is STSYSLKPHSVPPVSRKAKSQNRQATFSGRT. Residues 901-911 show a composition bias toward polar residues; it reads QNRQATFSGRT. Ser-924 is modified (phosphoserine). Lys-928 participates in a covalent cross-link: Glycyl lysine isopeptide (Lys-Gly) (interchain with G-Cter in SUMO2). Residues 971-990 form a disordered region; the sequence is RQAQQQQQQQQGSRPPGLSK. Positions 972 to 981 are enriched in low complexity; it reads QAQQQQQQQQ. Residues Lys-990, Lys-1091, Lys-1140, Lys-1162, Lys-1199, and Lys-1207 each participate in a glycyl lysine isopeptide (Lys-Gly) (interchain with G-Cter in SUMO2) cross-link. A coiled-coil region spans residues 1111–1147; that stretch reads YDTLGEEAREEEEGIREEEEQLKEKKKRKKLEYTICE. Phosphoserine is present on Ser-1208. 2 disordered regions span residues 1246–1332 and 1380–1429; these read RKKE…PGGP and RKSR…MEDI. Composition is skewed to low complexity over residues 1253–1269 and 1310–1322; these read QPSSSSSPSPSFQQQTS and KSSCNEGESSSTS. Phosphoserine is present on residues Ser-1430 and Ser-1457. Residues Lys-1461 and Lys-1502 each participate in a glycyl lysine isopeptide (Lys-Gly) (interchain with G-Cter in SUMO2) cross-link. Disordered regions lie at residues 1488–1517, 1905–1927, and 1967–2029; these read SRKPRTLLPSTSNSKMASSSGTATNRPGKN, SPPEPQSFASKTGSETKITYSSG, and QMKR…EDRG. 2 stretches are compositionally biased toward polar residues: residues 1495-1514 and 1911-1927; these read LPSTSNSKMASSSGTATNRP and SFASKTGSETKITYSSG. Residues 1968–1994 are compositionally biased toward basic and acidic residues; that stretch reads MKRESQNPDQKDETNSIKREQETKKVL. Residues Lys-1985 and Lys-1992 each participate in a glycyl lysine isopeptide (Lys-Gly) (interchain with G-Cter in SUMO2) cross-link. The segment covering 2008 to 2023 has biased composition (polar residues); the sequence is IKQNSGAATSEETLND. Residues Lys-2103, Lys-2113, Lys-2135, Lys-2139, Lys-2146, Lys-2159, Lys-2194, Lys-2206, and Lys-2238 each participate in a glycyl lysine isopeptide (Lys-Gly) (interchain with G-Cter in SUMO2) cross-link. The tract at residues 2258–2316 is disordered; sequence RRAAKSSRGNGHFQGHLLLPGEQIQPKQEKKGGRSSADFTVLDLEEDDEDDNEKTDDSI. Arg-2265 bears the Omega-N-methylarginine mark. Lys-2284 is covalently cross-linked (Glycyl lysine isopeptide (Lys-Gly) (interchain with G-Cter in SUMO2)). Residues 2300 to 2316 are compositionally biased toward acidic residues; the sequence is DLEEDDEDDNEKTDDSI. Residues Lys-2378, Lys-2413, Lys-2457, and Lys-2532 each participate in a glycyl lysine isopeptide (Lys-Gly) (interchain with G-Cter in SUMO2) cross-link. In terms of domain architecture, bHLH spans 2423–2474; that stretch reads YYRRTHTANERRRRGEMRDLFEKLKITLGLLHSSKVSKSLILTRAFSEIQGL. Ser-2541 is modified (phosphoserine). Lys-2546 participates in a covalent cross-link: Glycyl lysine isopeptide (Lys-Gly) (interchain with G-Cter in SUMO2). The segment at 2576 to 2595 is disordered; the sequence is KKDQATENTSPLNTPHTSAN. Over residues 2581–2595 the composition is skewed to polar residues; the sequence is TENTSPLNTPHTSAN. Glycyl lysine isopeptide (Lys-Gly) (interchain with G-Cter in SUMO2) cross-links involve residues Lys-2629, Lys-2679, Lys-2698, and Lys-2784. The tract at residues 2668–2709 is disordered; that stretch reads GSKYPHEVPDSKPSDHLKDTVRNEDNSLEDKGRISSRGNRDG. A compositionally biased stretch (basic and acidic residues) spans 2671 to 2709; that stretch reads YPHEVPDSKPSDHLKDTVRNEDNSLEDKGRISSRGNRDG. Positions 2817 to 2841 form a coiled coil; sequence DDTDETLTSLLNEIAFLNQQLNDDS. Phosphoserine is present on residues Ser-2910 and Ser-2921. The interval 2944–2968 is disordered; that stretch reads AIDGGKNTSGLPAEPESVSSPPTLH. At Ser-2978 the chain carries Phosphoserine. Lys-3041 participates in a covalent cross-link: Glycyl lysine isopeptide (Lys-Gly) (interchain with G-Cter in SUMO2).

In terms of assembly, interacts with MAX. Requires dimerization with MAX for E-box binding. Component of some MLL1/MLL complex, at least composed of the core components KMT2A/MLL1, ASH2L, HCFC1/HCF1, WDR5 and RBBP5, as well as the facultative components BACC1, CHD8, E2F6, HSP70, INO80C, KANSL1, LAS1L, MAX, MCRS1, MGA, MYST1/MOF, PELP1, PHF20, PRP31, RING2, RUVB1/TIP49A, RUVB2/TIP49B, SENP3, TAF1, TAF4, TAF6, TAF7, TAF9 and TEX10. Interacts with ZMYND11. In terms of tissue distribution, highly expressed in germ cells and granulosa cells.

It localises to the nucleus. Its function is as follows. Functions as a dual-specificity transcription factor, regulating the expression of both MAX-network and T-box family target genes. Functions as a repressor or an activator. Binds to 5'-AATTTCACACCTAGGTGTGAAATT-3' core sequence and seems to regulate MYC-MAX target genes. Suppresses transcriptional activation by MYC and inhibits MYC-dependent cell transformation. Function activated by heterodimerization with MAX. This heterodimerization serves the dual function of both generating an E-box-binding heterodimer and simultaneously blocking interaction of a corepressor. This Homo sapiens (Human) protein is MAX gene-associated protein.